We begin with the raw amino-acid sequence, 425 residues long: Cell adhesion molecule CEACAM16 (425 aa).

Residues 1–20 (MALTGYSWLLLSATFLNVGA) form the signal peptide. Residue N36 is glycosylated (N-linked (GlcNAc...) asparagine). Ig-like C2-type domains lie at 133 to 218 (PTVL…INLT) and 223 to 309 (PERV…ASVV). C153 and C201 are disulfide-bonded. An N-linked (GlcNAc...) asparagine glycan is attached at N216. C252 and C293 are oxidised to a cystine. An N-linked (GlcNAc...) asparagine glycan is attached at N394.

Belongs to the immunoglobulin superfamily. CEA family. Homooligomer; can for homodimers and homotetramers. Interacts with TECTA and TECTB.

It is found in the secreted. Functionally, required for proper hearing, plays a role in maintaining the integrity of the tectorial membrane. The protein is Cell adhesion molecule CEACAM16 of Homo sapiens (Human).